We begin with the raw amino-acid sequence, 405 residues long: MQVYLVGGAVRDKLLERPVKDKDWVVVGASEADMLAKGFQQVGKDFPVFLHPKTQQEYALARTERKIGQGYAGFECDTSTNVTLEQDLLRRDLTVNAMAMDDNGNIIDPFNGQKDLRNRVLRHVSDAFEEDPLRVLRVARFAARYASYGFSIADETKTLMANITQSGELSHLSAERVWVETAKSLLEDTPQIYFETLRECGALKVWFAELDCLWGIPNPAKWHPEIDTGIHSMMVLEQSVRVSHKLSVRFAALVHDLGKGLTPPEEWPSHRGHEKRGLVPINTLCERLKVPNDCRDLALLMSEFHSHVHHAFKLKAATINDFLDKCDVWRKPERFADLLLACTADAKGRTGFEERPYPNADYIWQAYLLAKEVNVQEIVQAGYKGAEIKQQLRQKRIHAIATNVA.

ATP contacts are provided by Gly8 and Arg11. Gly8 and Arg11 together coordinate CTP. Asp21 and Asp23 together coordinate Mg(2+). Residues Arg91, Arg137, and Arg140 each coordinate ATP. 3 residues coordinate CTP: Arg91, Arg137, and Arg140. An HD domain is found at 228–329; the sequence is TGIHSMMVLE…NDFLDKCDVW (102 aa).

The protein belongs to the tRNA nucleotidyltransferase/poly(A) polymerase family. Bacterial CCA-adding enzyme type 1 subfamily. In terms of assembly, monomer. Can also form homodimers and oligomers. Mg(2+) is required as a cofactor. Ni(2+) serves as cofactor.

The enzyme catalyses a tRNA precursor + 2 CTP + ATP = a tRNA with a 3' CCA end + 3 diphosphate. It catalyses the reaction a tRNA with a 3' CCA end + 2 CTP + ATP = a tRNA with a 3' CCACCA end + 3 diphosphate. Functionally, catalyzes the addition and repair of the essential 3'-terminal CCA sequence in tRNAs without using a nucleic acid template. Adds these three nucleotides in the order of C, C, and A to the tRNA nucleotide-73, using CTP and ATP as substrates and producing inorganic pyrophosphate. tRNA 3'-terminal CCA addition is required both for tRNA processing and repair. Also involved in tRNA surveillance by mediating tandem CCA addition to generate a CCACCA at the 3' terminus of unstable tRNAs. While stable tRNAs receive only 3'-terminal CCA, unstable tRNAs are marked with CCACCA and rapidly degraded. In Pseudoalteromonas atlantica (strain T6c / ATCC BAA-1087), this protein is Multifunctional CCA protein.